The following is a 137-amino-acid chain: Hydrogenase-4 component J (137 aa).

It to E.coli HycH.

Functionally, possible component of hydrogenase 4. This is Hydrogenase-4 component J from Escherichia coli (strain K12).